The following is a 509-amino-acid chain: ATP synthase subunit alpha (509 aa).

Gly-169–Thr-176 serves as a coordination point for ATP.

Belongs to the ATPase alpha/beta chains family. As to quaternary structure, F-type ATPases have 2 components, CF(1) - the catalytic core - and CF(0) - the membrane proton channel. CF(1) has five subunits: alpha(3), beta(3), gamma(1), delta(1), epsilon(1). CF(0) has three main subunits: a(1), b(2) and c(9-12). The alpha and beta chains form an alternating ring which encloses part of the gamma chain. CF(1) is attached to CF(0) by a central stalk formed by the gamma and epsilon chains, while a peripheral stalk is formed by the delta and b chains.

The protein resides in the cell inner membrane. The catalysed reaction is ATP + H2O + 4 H(+)(in) = ADP + phosphate + 5 H(+)(out). Produces ATP from ADP in the presence of a proton gradient across the membrane. The alpha chain is a regulatory subunit. This is ATP synthase subunit alpha from Xanthobacter autotrophicus (strain ATCC BAA-1158 / Py2).